Consider the following 78-residue polypeptide: Large ribosomal subunit protein eL20 (78 aa).

It belongs to the eukaryotic ribosomal protein eL20 family. As to quaternary structure, part of the 50S ribosomal subunit. Binds 23S rRNA.

The polypeptide is Large ribosomal subunit protein eL20 (Methanothermobacter thermautotrophicus (strain ATCC 29096 / DSM 1053 / JCM 10044 / NBRC 100330 / Delta H) (Methanobacterium thermoautotrophicum)).